Here is a 477-residue protein sequence, read N- to C-terminus: Putative multidrug resistance protein MdtD (477 aa).

14 consecutive transmembrane segments (helical) span residues 13-33, 50-70, 73-93, 107-127, 139-159, 166-186, 196-216, 220-240, 268-288, 291-311, 326-348, 352-374, 394-414, and 432-452; these read LWIV…VNTA, SVIV…GWLA, VGVQ…SILC, VVQG…VMKI, FVTL…GFLV, WIFL…LLLM, FDIS…LALD, GMGL…AALA, LTAS…TPLF, VGMG…IIGS, GYRN…FPLV, GWIW…RFSA, LLSM…GILI, and AFIY…LAFA.

The protein belongs to the major facilitator superfamily. TCR/Tet family.

The protein localises to the cell inner membrane. The polypeptide is Putative multidrug resistance protein MdtD (Serratia proteamaculans (strain 568)).